The following is a 389-amino-acid chain: Jasmonate O-methyltransferase (389 aa).

Y18 is a binding site for S-adenosyl-L-homocysteine. Q25 provides a ligand contact to jasmonate. S-adenosyl-L-homocysteine is bound by residues C60, N65, D97, L98, S142, and F143. H163 and W164 together coordinate jasmonate. Positions 186, 272, 274, and 275 each coordinate Mg(2+).

Belongs to the methyltransferase superfamily. Type-7 methyltransferase family. It depends on Mg(2+) as a cofactor. As to expression, expressed in rosettes, cauline leaves and developing flowers but not in young seedlings.

The protein localises to the cytoplasm. Its subcellular location is the nucleus. The catalysed reaction is jasmonate + S-adenosyl-L-methionine = methyl (-)-jasmonate + S-adenosyl-L-homocysteine. Its pathway is lipid metabolism; oxylipin biosynthesis. In terms of biological role, catalyzes the methylation of jasmonate into methyljasmonate, a plant volatile that acts as an important cellular regulator mediating diverse developmental processes and defense responses. In Arabidopsis thaliana (Mouse-ear cress), this protein is Jasmonate O-methyltransferase.